Reading from the N-terminus, the 168-residue chain is RxLR effector protein CRE8 (168 aa).

Residues 1 to 23 (MRLPSILVVAASTLFLHYGYTSA) form the signal peptide. Residues 54-69 (RFLRDGKIAEGDNEER) carry the RxLR-dEER motif.

It belongs to the RxLR effector family.

The protein resides in the secreted. It localises to the host cell. Effector that is involved in host plant infection. Contributes to virulence during the early infection stage, by inhibiting plant defense responses induced by both PAMP-triggered immunity (PTI) and effector-triggered immunity (ETI). This is RxLR effector protein CRE8 from Phytophthora infestans (strain T30-4) (Potato late blight agent).